We begin with the raw amino-acid sequence, 631 residues long: ATP-dependent zinc metalloprotease FtsH (631 aa).

Over 1–2 (MK) the chain is Stromal. Residues 3 to 23 (ISWKNILLTLIPLGLISFLVW) traverse the membrane as a helical segment. Topologically, residues 24–118 (QGFNNTTNPQ…AHATNDSTPA (95 aa)) are lumenal. A helical transmembrane segment spans residues 119-139 (WSLIGNLIFPILLIAGLAFLF). Residues 140 to 631 (RRSSNLPGGP…IDYKSQLKST (492 aa)) lie on the Stromal side of the membrane. ATP is bound at residue 213–220 (GPPGTGKT). Residue H434 participates in Zn(2+) binding. E435 is an active-site residue. Residues H438 and D512 each coordinate Zn(2+).

This sequence in the central section; belongs to the AAA ATPase family. In the C-terminal section; belongs to the peptidase M41 family. As to quaternary structure, homohexamer. The cofactor is Zn(2+).

It localises to the plastid. The protein resides in the chloroplast thylakoid membrane. Its function is as follows. Acts as a processive, ATP-dependent zinc metallopeptidase. In Guillardia theta (Cryptophyte), this protein is ATP-dependent zinc metalloprotease FtsH.